The chain runs to 2042 residues: Protein mini spindles (2042 aa).

TOG stretches follow at residues 1 to 229 (MAED…VEPS) and 267 to 505 (MDLL…KVAG). A binds tubulin region spans residues 1–505 (MAEDTEYKKL…KAEIKIKVAG (505 aa)). 2 promotes microtubule polymerization regions span residues 1 to 516 (MAED…ASAP) and 581 to 1080 (TPEE…EKAR). HEAT repeat units follow at residues 120–157 (EKQE…EFGH), 160–197 (IGVK…WIGA), 270–311 (LDPV…DHPK), 315–353 (GEYG…GLAK), 357–394 (NYAS…STSL), 396–433 (AQQE…TALN), and 440–478 (LTTS…VTPL). The interval 498 to 821 (EIKIKVAGPK…PKPVRGVQRS (324 aa)) is association with microtubule lattice. The segment at 506 to 572 (PKKETRPASA…PTAALKAGGK (67 aa)) is disordered. Residues 513 to 531 (ASAPTAKAAAPAKTVAGSV) show a composition bias toward low complexity. The tract at residues 581–814 (TPEELQEKSE…KNVGEKPPKP (234 aa)) is TOG 3. HEAT repeat units follow at residues 587–624 (EKSE…SGFD), 625–662 (AKQA…IIRS), 672–710 (TTVD…LEYV), and 745–782 (LQPK…YMGK). The tract at residues 804 to 849 (DKNVGEKPPKPVRGVQRSSGGTAGNSPDNEDDDGGAAGEEEPINMA) is disordered. The segment covering 819 to 830 (QRSSGGTAGNSP) has biased composition (polar residues). A compositionally biased stretch (acidic residues) spans 831 to 845 (DNEDDDGGAAGEEEP). TOG stretches follow at residues 849–1087 (ADLL…PVKP) and 1179–1415 (TELL…KPTP). HEAT repeat units lie at residues 856–893 (DIAP…EARL), 896–933 (PSIG…AMGA), 937–974 (NHVR…KGGY), and 1017–1054 (EDIH…HLGF). The tract at residues 1083-1140 (LPVKPLPKGKHQAPIPEEPKLKTVRGGGAGGAPGIQKSATARVAGGQDKQVPARKKDE) is disordered. The association with microtubule lattice stretch occupies residues 1099–1428 (EEPKLKTVRG…VDVPAPQRHD (330 aa)). HEAT repeat units lie at residues 1205 to 1242 (RYHL…RFYD), 1272 to 1309 (NEGS…VFPF), 1311 to 1344 (KVFG…SYGM), and 1346 to 1383 (ICPQ…LSGE). Disordered regions lie at residues 1407–1455 (AKKT…TFDQ) and 1940–1959 (NAGS…NGPD). Over residues 1940–1957 (NAGSTQDNRTDVNYQNNG) the composition is skewed to polar residues.

It belongs to the TOG/XMAP215 family. Interacts with tacc, dgt6. Interacts with mv. Interacts with Patronin.

It is found in the cytoplasm. The protein localises to the cytoskeleton. Its subcellular location is the microtubule organizing center. The protein resides in the centrosome. It localises to the spindle. It is found in the perinuclear region. Binds to the plus end of microtubules and regulates microtubule dynamics and microtubule organization. Function in neurons is essential for adult survival, and is important for climbing behavior and activity. Promotes cytoplasmic microtubule nucleation and elongation. May act as a microtubule antipause factor that rapidly catalyzes the transition from pause to either growth or shrinkage. Involved in mitotic spindle elongation. Involved in the establishment of cell polarity and mitotic spindle orientation in neuroblasts. Required for maintaining the bipolarity of acentrosomal meiotic spindles; the function is dependent on tacc and involves ncd. Involved in oocyte microtubule cytoskeleton organization and bicoid mRNA localization. Seems to be involved in elongation of kinetochore-derived microtubule fibers. In fat body cells, essential component of perinuclear non-centrosomal microtubule-organizing centers (ncMTOCs) which function to accommodate the organization of microtubule (MT) networks to control nuclear positioning and dynein motor-based retrograde endosomal trafficking. Within the ncMTOCs, Msp300 and shot anchors the ncMTOC at the nuclear surface and recruits the MT minus-end regulators Patronin and Nin for assembly, anchoring and/or stabilization of circumferential and radial MTs at the ncMTOCs. Patronin, and perhaps Nin, then recruits msps to the ncMTOC where it is required for the gamma-tubulin-independent elongation and assembly of radial MTs. The protein is Protein mini spindles (msps) of Drosophila melanogaster (Fruit fly).